The primary structure comprises 86 residues: MGMKSPNIAAFMLPLLLILFTLSSQLKVVESTGRKLAWGFSGTPIVYTPPSRSCGTSPAVFTSKWRRPRPCRLPPGSYIPASDQSP.

The N-terminal stretch at methionine 1 to serine 31 is a signal peptide. An SCOOP motif motif is present at residues isoleucine 45–proline 58. The short motif at serine 51–serine 53 is the SxS motif essential for MIK2 binding element.

This sequence belongs to the serine rich endogenous peptide (SCOOP) phytocytokine family. Interacts with MIK2 (via extracellular leucine-rich repeat domain); this interaction triggers the formation of complex between MIK2 and the BAK1/SERK3 and SERK4 coreceptors, and subsequent BAK1 activation by phosphorylation. As to expression, mostly expressed in leaves, and, to a lower extent, in roots, stems, siliques, seeds and flowers.

It localises to the cell membrane. The protein resides in the secreted. It is found in the extracellular space. Its subcellular location is the apoplast. Its function is as follows. Brassicaceae-specific phytocytokine (plant endogenous peptide released into the apoplast) perceived by MIK2 in a BAK1/SERK3 and SERK4 coreceptors-dependent manner, that modulates various physiological and antimicrobial processes including growth prevention and reactive oxygen species (ROS) response regulation. Prevents general growth and development. This Arabidopsis thaliana (Mouse-ear cress) protein is Secreted transmembrane peptide 6.